A 395-amino-acid chain; its full sequence is Elongation factor Tu (395 aa).

The region spanning 10 to 204 is the tr-type G domain; the sequence is KPHVNIGTIG…AVDEYIPTPQ (195 aa). A G1 region spans residues 19-26; the sequence is GHVDHGKT. Position 19–26 (19–26) interacts with GTP; the sequence is GHVDHGKT. Threonine 26 is a binding site for Mg(2+). The interval 60–64 is G2; the sequence is GITIS. The tract at residues 81–84 is G3; the sequence is DCPG. GTP contacts are provided by residues 81–85 and 136–139; these read DCPGH and NKCD. The interval 136 to 139 is G4; it reads NKCD. Positions 174–176 are G5; that stretch reads SAL.

The protein belongs to the TRAFAC class translation factor GTPase superfamily. Classic translation factor GTPase family. EF-Tu/EF-1A subfamily. As to quaternary structure, monomer.

It is found in the cytoplasm. It catalyses the reaction GTP + H2O = GDP + phosphate + H(+). Functionally, GTP hydrolase that promotes the GTP-dependent binding of aminoacyl-tRNA to the A-site of ribosomes during protein biosynthesis. This chain is Elongation factor Tu, found in Geobacillus kaustophilus (strain HTA426).